The following is a 484-amino-acid chain: Glutamyl-tRNA(Gln) amidotransferase subunit A (484 aa).

Residues lysine 76 and serine 151 each act as charge relay system in the active site. Serine 175 acts as the Acyl-ester intermediate in catalysis.

The protein belongs to the amidase family. GatA subfamily. In terms of assembly, heterotrimer of A, B and C subunits.

It carries out the reaction L-glutamyl-tRNA(Gln) + L-glutamine + ATP + H2O = L-glutaminyl-tRNA(Gln) + L-glutamate + ADP + phosphate + H(+). Its function is as follows. Allows the formation of correctly charged Gln-tRNA(Gln) through the transamidation of misacylated Glu-tRNA(Gln) in organisms which lack glutaminyl-tRNA synthetase. The reaction takes place in the presence of glutamine and ATP through an activated gamma-phospho-Glu-tRNA(Gln). In Thioalkalivibrio sulfidiphilus (strain HL-EbGR7), this protein is Glutamyl-tRNA(Gln) amidotransferase subunit A.